Reading from the N-terminus, the 214-residue chain is Small ribosomal subunit protein uS5 (214 aa).

The 64-residue stretch at 54 to 117 (LKYEVMDIKI…KNAKMNIIPV (64 aa)) folds into the S5 DRBM domain.

This sequence belongs to the universal ribosomal protein uS5 family. As to quaternary structure, part of the 30S ribosomal subunit. Contacts protein S4.

Its function is as follows. With S4 and S12 plays an important role in translational accuracy. This Sulfurisphaera tokodaii (strain DSM 16993 / JCM 10545 / NBRC 100140 / 7) (Sulfolobus tokodaii) protein is Small ribosomal subunit protein uS5.